The chain runs to 66 residues: Large ribosomal subunit protein bL35 (66 aa).

The protein belongs to the bacterial ribosomal protein bL35 family.

The protein is Large ribosomal subunit protein bL35 of Synechococcus sp. (strain RCC307).